The primary structure comprises 332 residues: Delta-aminolevulinic acid dehydratase (332 aa).

Lysine 199 serves as the catalytic Schiff-base intermediate with substrate. 5-aminolevulinate is bound by residues arginine 209 and lysine 221. Mg(2+) is bound at residue glutamate 237. Lysine 252 (schiff-base intermediate with substrate) is an active-site residue. The 5-aminolevulinate site is built by serine 278 and tyrosine 317.

This sequence belongs to the ALAD family. In terms of assembly, homooctamer.

The catalysed reaction is 2 5-aminolevulinate = porphobilinogen + 2 H2O + H(+). Its pathway is porphyrin-containing compound metabolism; protoporphyrin-IX biosynthesis; coproporphyrinogen-III from 5-aminolevulinate: step 1/4. In terms of biological role, catalyzes an early step in the biosynthesis of tetrapyrroles. Binds two molecules of 5-aminolevulinate per subunit, each at a distinct site, and catalyzes their condensation to form porphobilinogen. This Chlamydia pneumoniae (Chlamydophila pneumoniae) protein is Delta-aminolevulinic acid dehydratase (hemB).